Reading from the N-terminus, the 436-residue chain is Trigger factor (436 aa).

In terms of domain architecture, PPIase FKBP-type spans 163–248 (GDRVTVDFEG…VKKIEAAHLP (86 aa)).

It belongs to the FKBP-type PPIase family. Tig subfamily.

It is found in the cytoplasm. It catalyses the reaction [protein]-peptidylproline (omega=180) = [protein]-peptidylproline (omega=0). Functionally, involved in protein export. Acts as a chaperone by maintaining the newly synthesized protein in an open conformation. Functions as a peptidyl-prolyl cis-trans isomerase. The protein is Trigger factor of Acidovorax ebreus (strain TPSY) (Diaphorobacter sp. (strain TPSY)).